A 290-amino-acid polypeptide reads, in one-letter code: Lipoyl synthase (290 aa).

[4Fe-4S] cluster is bound by residues C44, C49, C55, C70, C74, C77, and S282. Residues 56–271 (WGEGTATFMI…ELLGKEMGFR (216 aa)) enclose the Radical SAM core domain.

It belongs to the radical SAM superfamily. Lipoyl synthase family. [4Fe-4S] cluster is required as a cofactor.

The protein resides in the cytoplasm. It catalyses the reaction [[Fe-S] cluster scaffold protein carrying a second [4Fe-4S](2+) cluster] + N(6)-octanoyl-L-lysyl-[protein] + 2 oxidized [2Fe-2S]-[ferredoxin] + 2 S-adenosyl-L-methionine + 4 H(+) = [[Fe-S] cluster scaffold protein] + N(6)-[(R)-dihydrolipoyl]-L-lysyl-[protein] + 4 Fe(3+) + 2 hydrogen sulfide + 2 5'-deoxyadenosine + 2 L-methionine + 2 reduced [2Fe-2S]-[ferredoxin]. Its pathway is protein modification; protein lipoylation via endogenous pathway; protein N(6)-(lipoyl)lysine from octanoyl-[acyl-carrier-protein]: step 2/2. Catalyzes the radical-mediated insertion of two sulfur atoms into the C-6 and C-8 positions of the octanoyl moiety bound to the lipoyl domains of lipoate-dependent enzymes, thereby converting the octanoylated domains into lipoylated derivatives. In Flavobacterium psychrophilum (strain ATCC 49511 / DSM 21280 / CIP 103535 / JIP02/86), this protein is Lipoyl synthase.